The primary structure comprises 384 residues: MKNICILGATGSIGTQTLEVIREEKENLKLYAASANKSSEKIISIIEEFEPKYVSMTDKEAFLKVKEFCMKNNKNTEVLYGIEGMNTIASLDKVDIVLTSVVGMIGLEPTLKAIRNKKDIALANKETLVVAGEIIKKEAHENKVNILPVDSEHGAIFQCLLGNLKGDINKIHLTASGGPFRGKKREELENVTVEQALKHPNWNMGKKISIDSATLMNKGLEVIEAHFLFDVDYEDIEVVVHPESIIHSMVEYKDGSVIAQLASPDMKLPIQYALNYPIRKDRVIEKLNLFEIEKLTFYKPDLKTFKCLDLAYRAGKIGGMMPTILNSSNEYAVELFLNKKIGFLEIPKIIEECMKKFYTKEEQSVEKIIHMDKIIGEYIREKYN.

NADPH is bound by residues Thr-10, Gly-11, Ser-12, Ile-13, Lys-37, and Asn-124. Lys-125 is a binding site for 1-deoxy-D-xylulose 5-phosphate. Position 126 (Glu-126) interacts with NADPH. Residue Asp-150 coordinates Mn(2+). Residues Ser-151, Glu-152, Ser-176, and His-199 each contribute to the 1-deoxy-D-xylulose 5-phosphate site. Mn(2+) is bound at residue Glu-152. Gly-205 is an NADPH binding site. 1-deoxy-D-xylulose 5-phosphate contacts are provided by Ser-212, Asn-217, Lys-218, and Glu-221. Glu-221 is a binding site for Mn(2+).

It belongs to the DXR family. Requires Mg(2+) as cofactor. Mn(2+) serves as cofactor.

The enzyme catalyses 2-C-methyl-D-erythritol 4-phosphate + NADP(+) = 1-deoxy-D-xylulose 5-phosphate + NADPH + H(+). It participates in isoprenoid biosynthesis; isopentenyl diphosphate biosynthesis via DXP pathway; isopentenyl diphosphate from 1-deoxy-D-xylulose 5-phosphate: step 1/6. In terms of biological role, catalyzes the NADPH-dependent rearrangement and reduction of 1-deoxy-D-xylulose-5-phosphate (DXP) to 2-C-methyl-D-erythritol 4-phosphate (MEP). This chain is 1-deoxy-D-xylulose 5-phosphate reductoisomerase, found in Clostridium tetani (strain Massachusetts / E88).